Consider the following 274-residue polypeptide: 2,3,4,5-tetrahydropyridine-2,6-dicarboxylate N-succinyltransferase (274 aa).

Substrate-binding residues include arginine 106 and aspartate 143.

It belongs to the transferase hexapeptide repeat family. In terms of assembly, homotrimer.

The protein localises to the cytoplasm. It catalyses the reaction (S)-2,3,4,5-tetrahydrodipicolinate + succinyl-CoA + H2O = (S)-2-succinylamino-6-oxoheptanedioate + CoA. The protein operates within amino-acid biosynthesis; L-lysine biosynthesis via DAP pathway; LL-2,6-diaminopimelate from (S)-tetrahydrodipicolinate (succinylase route): step 1/3. The protein is 2,3,4,5-tetrahydropyridine-2,6-dicarboxylate N-succinyltransferase of Rickettsia prowazekii (strain Madrid E).